An 83-amino-acid chain; its full sequence is MLIFILSILPYNICSLIGTELYDCIFLYTKSNGCSRLQTCIKVSCSMLEFMYLAEDIPIQFDGIGNCLLSMVIMEYHLLFANI.

This is an uncharacterized protein from Vaccinia virus (strain Copenhagen) (VACV).